A 288-amino-acid polypeptide reads, in one-letter code: Tryptophan 2,3-dioxygenase (288 aa).

Substrate is bound by residues 57–61, Y119, and R123; that span reads FIIQH. Residue H246 coordinates heme. Substrate is bound at residue T260.

It belongs to the tryptophan 2,3-dioxygenase family. Homotetramer. Heme serves as cofactor.

The catalysed reaction is L-tryptophan + O2 = N-formyl-L-kynurenine. Its pathway is amino-acid degradation; L-tryptophan degradation via kynurenine pathway; L-kynurenine from L-tryptophan: step 1/2. In terms of biological role, heme-dependent dioxygenase that catalyzes the oxidative cleavage of the L-tryptophan (L-Trp) pyrrole ring and converts L-tryptophan to N-formyl-L-kynurenine. Catalyzes the oxidative cleavage of the indole moiety. This chain is Tryptophan 2,3-dioxygenase, found in Pseudomonas aeruginosa (strain UCBPP-PA14).